Here is a 215-residue protein sequence, read N- to C-terminus: Adenylate kinase (215 aa).

10 to 15 (GAGKGT) serves as a coordination point for ATP. Residues 30–59 (STGDMFRAAMKNETEMGKLAKSFIDKGELV) are NMP. AMP is bound by residues Thr-31, Arg-36, 57–59 (ELV), 86–89 (GYPR), and Gln-93. Residues 127–165 (GRYICRNCGATYHKIFNPTKVEGTCDVCGSHDLYQRADD) are LID. Residue Arg-128 coordinates ATP. Residues Cys-131 and Cys-134 each coordinate Zn(2+). 137–138 (TY) serves as a coordination point for ATP. Residues Cys-151 and Cys-154 each coordinate Zn(2+). Positions 162 and 173 each coordinate AMP. Gln-201 provides a ligand contact to ATP.

This sequence belongs to the adenylate kinase family. As to quaternary structure, monomer.

Its subcellular location is the cytoplasm. The catalysed reaction is AMP + ATP = 2 ADP. The protein operates within purine metabolism; AMP biosynthesis via salvage pathway; AMP from ADP: step 1/1. In terms of biological role, catalyzes the reversible transfer of the terminal phosphate group between ATP and AMP. Plays an important role in cellular energy homeostasis and in adenine nucleotide metabolism. The sequence is that of Adenylate kinase from Lactococcus lactis subsp. cremoris (strain SK11).